We begin with the raw amino-acid sequence, 141 residues long: Large ribosomal subunit protein uL23A (141 aa).

Ser68 and Ser70 each carry phosphoserine.

It belongs to the universal ribosomal protein uL23 family. Component of the large ribosomal subunit (LSU). Mature yeast ribosomes consist of a small (40S) and a large (60S) subunit. The 40S small subunit contains 1 molecule of ribosomal RNA (18S rRNA) and at least 33 different proteins. The large 60S subunit contains 3 rRNA molecules (25S, 5.8S and 5S rRNA) and at least 46 different proteins. uL23 is associated with the polypeptide exit tunnel.

It localises to the cytoplasm. Functionally, this protein binds to a specific region on the 26S rRNA. Its function is as follows. Component of the ribosome, a large ribonucleoprotein complex responsible for the synthesis of proteins in the cell. The small ribosomal subunit (SSU) binds messenger RNAs (mRNAs) and translates the encoded message by selecting cognate aminoacyl-transfer RNA (tRNA) molecules. The large subunit (LSU) contains the ribosomal catalytic site termed the peptidyl transferase center (PTC), which catalyzes the formation of peptide bonds, thereby polymerizing the amino acids delivered by tRNAs into a polypeptide chain. The nascent polypeptides leave the ribosome through a tunnel in the LSU and interact with protein factors that function in enzymatic processing, targeting, and the membrane insertion of nascent chains at the exit of the ribosomal tunnel. uL23 is a major component of the universal docking site for these factors at the polypeptide exit tunnel. This is Large ribosomal subunit protein uL23A (rpl2501) from Schizosaccharomyces pombe (strain 972 / ATCC 24843) (Fission yeast).